A 258-amino-acid chain; its full sequence is Ribonuclease HII (258 aa).

The 188-residue stretch at 71 to 258 (QLIAGIDEVG…PIKTMVNFKS (188 aa)) folds into the RNase H type-2 domain. The a divalent metal cation site is built by Asp77, Glu78, and Asp169.

The protein belongs to the RNase HII family. Mn(2+) serves as cofactor. The cofactor is Mg(2+).

It localises to the cytoplasm. The enzyme catalyses Endonucleolytic cleavage to 5'-phosphomonoester.. Its function is as follows. Endonuclease that specifically degrades the RNA of RNA-DNA hybrids. The protein is Ribonuclease HII (rnhB) of Lactococcus lactis subsp. lactis (strain IL1403) (Streptococcus lactis).